The sequence spans 484 residues: MNNKGSGLTPAQALDKLDALYEQSVVALRNAIGNYITSGELPDENARKQGLFVYPSLTVTWDGSTTNPPKTRAFGRFTHAGSYTTTITRPTLFRSYLNEQLTLLYQDYGAHISVQPSQHEIPYPYVIDGSELTLDRSMSAGLTRYFPTTELAQIGDETADGIYHPTEFSPLSHFDARRVDFSLARLRHYTGTPVEHFQPFVLFTNYTRYVDEFVRWGCSQILDPDSPYIALSCAGGNWITAETEAPEEAISDLAWKKHQMPAWHLITADGQGITLVNIGVGPSNAKTICDHLAVLRPDVWLMIGHCGGLRESQAIGDYVLAHAYLRDDHVLDAVLPPDIPIPSIAEVQRALYDATKLVSGRPGEEVKQRLRTGTVVTTDDRNWELRYSASALRFNLSRAVAIDMESATIAAQGYRFRVPYGTLLCVSDKPLHGEIKLPGQANRFYEGAISEHLQIGIRAIDLLRAEGDRLHSRKLRTFNEPPFR.

This sequence belongs to the AMP nucleosidase family.

It carries out the reaction AMP + H2O = adenine + D-ribose 5-phosphate. Functionally, catalyzes the hydrolysis of the N-glycosidic bond of AMP to form adenine and ribose 5-phosphate. Involved in regulation of AMP concentrations. The protein is AMP nucleosidase of Escherichia coli O157:H7.